Here is a 347-residue protein sequence, read N- to C-terminus: Acetylglutamate kinase, chloroplastic (347 aa).

The transit peptide at 1-50 directs the protein to the chloroplast; sequence MATVTSNASPKSFSFTVSNPFKTLIPNKSPSLCYPTRNKNHHRLGFSIKA. An N-acetylthreonine modification is found at Thr51. 94-95 contributes to the ATP binding site; the sequence is GA. N-acetyl-L-glutamate-binding positions include Gly126, Arg148, and 242–245; that span reads NINA. Lys260 provides a ligand contact to L-arginine. ATP is bound by residues 265–266 and Leu271; that span reads TD. Lys282 is an L-arginine binding site. Position 297–305 (297–305) interacts with ATP; the sequence is KVAGGMIPK. L-arginine-binding positions include 334–337 and Gly342; that span reads EIMS.

Belongs to the acetylglutamate kinase family. ArgB subfamily. As to quaternary structure, interacts with GLB1. Interaction is dependent of MgATP and inhibited by 2-oxoglutarate, arginine, glutamate, citrate, and oxaloacetate.

It is found in the plastid. Its subcellular location is the chloroplast stroma. The enzyme catalyses N-acetyl-L-glutamate + ATP = N-acetyl-L-glutamyl 5-phosphate + ADP. It functions in the pathway amino-acid biosynthesis; L-arginine biosynthesis; N(2)-acetyl-L-ornithine from L-glutamate: step 2/4. Inhibited by arginine. Inhibition is relieved by binding to GLB1. Involved in the arginine biosynthetic pathway via the intermediate compound ornithine. This is Acetylglutamate kinase, chloroplastic from Arabidopsis thaliana (Mouse-ear cress).